Here is a 24-residue protein sequence, read N- to C-terminus: Cytochrome c3-2 (24 aa).

The disordered stretch occupies residues 1 to 24; the sequence is GNAPAADMVLKAPGDAKMTKTAVP.

Post-translationally, binds 4 heme groups per subunit.

The protein resides in the periplasm. Participates in sulfate respiration coupled with phosphorylation by transferring electrons from the enzyme dehydrogenase to ferredoxin. The protein is Cytochrome c3-2 of Nitratidesulfovibrio vulgaris (Desulfovibrio vulgaris).